A 406-amino-acid chain; its full sequence is Phosphopentomutase (406 aa).

Positions 10, 305, 310, 346, 347, and 358 each coordinate Mn(2+).

It belongs to the phosphopentomutase family. The cofactor is Mn(2+).

Its subcellular location is the cytoplasm. It carries out the reaction 2-deoxy-alpha-D-ribose 1-phosphate = 2-deoxy-D-ribose 5-phosphate. The catalysed reaction is alpha-D-ribose 1-phosphate = D-ribose 5-phosphate. The protein operates within carbohydrate degradation; 2-deoxy-D-ribose 1-phosphate degradation; D-glyceraldehyde 3-phosphate and acetaldehyde from 2-deoxy-alpha-D-ribose 1-phosphate: step 1/2. Its function is as follows. Isomerase that catalyzes the conversion of deoxy-ribose 1-phosphate (dRib-1-P) and ribose 1-phosphate (Rib-1-P) to deoxy-ribose 5-phosphate (dRib-5-P) and ribose 5-phosphate (Rib-5-P), respectively. In Sinorhizobium medicae (strain WSM419) (Ensifer medicae), this protein is Phosphopentomutase.